We begin with the raw amino-acid sequence, 1081 residues long: Importin-4 (1081 aa).

The residue at position 1 (Met1) is an N-acetylmethionine. The 67-residue stretch at 24 to 90 (ATEQLQIVLR…KSLILTALQR (67 aa)) folds into the Importin N-terminal domain. HEAT repeat units lie at residues 348 to 385 (KLCP…GAGD), 390 to 427 (RLLP…NLQP), 431 to 471 (SYSR…NLGP), 475 to 513 (PYLP…AAQA), 895 to 932 (QFVS…HGGH), and 936 to 974 (EHFP…ASPT).

Belongs to the importin beta family. As to quaternary structure, found in a cytosolic complex with ASF1 (ASF1A or ASF1B) and histones H3 and H4.

It localises to the cytoplasm. Its subcellular location is the nucleus. Its function is as follows. Nuclear transport receptor that mediates nuclear import of proteins, such as histones, RPS3A, TNP2 and VDR. Serves as receptor for nuclear localization signals (NLS) in cargo substrates. Is thought to mediate docking of the importin/substrate complex to the nuclear pore complex (NPC) through binding to nucleoporin and the complex is subsequently translocated through the pore by an energy requiring, Ran-dependent mechanism. At the nucleoplasmic side of the NPC, Ran binds to the importin, the importin/substrate complex dissociates and importin is re-exported from the nucleus to the cytoplasm where GTP hydrolysis releases Ran. The directionality of nuclear import is thought to be conferred by an asymmetric distribution of the GTP- and GDP-bound forms of Ran between the cytoplasm and nucleus. Mediates the nuclear import of the histone H3-H4 dimer when in complex with ASF1 (ASF1A or ASF1B). Mediates the ligand-independent nuclear import of vitamin D receptor (VDR). In vitro, mediates the nuclear import of human cytomegalovirus UL84 by recognizing a non-classical NLS. The protein is Importin-4 (IPO4) of Homo sapiens (Human).